The primary structure comprises 123 residues: Small ribosomal subunit protein uS12 (123 aa).

Asp89 carries the post-translational modification 3-methylthioaspartic acid.

This sequence belongs to the universal ribosomal protein uS12 family. Part of the 30S ribosomal subunit. Contacts proteins S8 and S17. May interact with IF1 in the 30S initiation complex.

With S4 and S5 plays an important role in translational accuracy. In terms of biological role, interacts with and stabilizes bases of the 16S rRNA that are involved in tRNA selection in the A site and with the mRNA backbone. Located at the interface of the 30S and 50S subunits, it traverses the body of the 30S subunit contacting proteins on the other side and probably holding the rRNA structure together. The combined cluster of proteins S8, S12 and S17 appears to hold together the shoulder and platform of the 30S subunit. The chain is Small ribosomal subunit protein uS12 from Beijerinckia indica subsp. indica (strain ATCC 9039 / DSM 1715 / NCIMB 8712).